We begin with the raw amino-acid sequence, 2090 residues long: Ninein (2090 aa).

EF-hand domains lie at 8–43 and 42–77; these read QHEA…LSLE and LEEV…ILSR. S152 carries the post-translational modification Phosphoserine. 2 consecutive EF-hand domains span residues 182-217 and 219-252; these read WIEE…YGLQ and VDGE…NGKS. 245–252 provides a ligand contact to GTP; sequence GLFKNGKS. Position 269 is a phosphoserine (S269). 300-304 is a GTP binding site; sequence DGMGH. Residues 317-352 form the EF-hand 5 domain; sequence EGIENSQEILKALDFSLDGNINLTELTLALENELLV. Residues 357-570 are a coiled coil; that stretch reads IHQAALASFK…YRAQGRVLRL (214 aa). A GTP-binding site is contributed by 420–423; it reads RKLD. Residues 574–595 are disordered; sequence NSPSEEVEANSGGIEPEHGLGS. 4 coiled-coil regions span residues 625–1027, 1068–1099, 1181–1341, and 1441–1816; these read LRLE…QATS, LSLQ…QKLE, SELE…SVVQ, and QDKH…AGGK. Residues 802-1505 form an important for interaction with CEP170 region; it reads KMETECNRRT…HDLQITCSEM (704 aa). The segment at 1152 to 1190 is disordered; that stretch reads VRDLGSTGTSSVQRQEVKIEESEASVEGFSELENSEETR. S1550 and S1837 each carry phosphoserine. Coiled coils occupy residues 1854 to 1885 and 1922 to 2067; these read QENE…SNLL and ANRK…QVSL.

In terms of assembly, homooligomer. Interacts with GSK3B/GSK3-beta via its C-terminal domain. Interacts with C14ORF166, such interaction may prevent its phosphorylation by GSK3B. Interacts with AUNIP (via N-terminus). Identified in a complex with AUNIP and AURKA. Interacts with CCDC120. Interacts (via C-terminus) with CEP250. Interacts with CEP170. Interacts with the gamma-tubulin ring complex component TUBGCP3. Interacts with gamma-tubulin. Isoform 6 does not interact with CEP170 or CEP250. Phosphorylated by AURKA/Aurora kinase A and PKA kinases but not CK2 or AURKB/ Aurora kinase B. In terms of tissue distribution, ubiquitous. Highly expressed in heart and skeletal muscle. Isoform 1 is more expressed than isoform 5.

It is found in the cytoplasm. It localises to the cytoskeleton. The protein localises to the microtubule organizing center. Its subcellular location is the centrosome. The protein resides in the centriole. In terms of biological role, centrosomal protein required in the positioning and anchorage of the microtubule minus-end in epithelial cells. May also act as a centrosome maturation factor. May play a role in microtubule nucleation, by recruiting the gamma-tubulin ring complex to the centrosome. Overexpression does not perturb nucleation or elongation of microtubules but suppresses release of microtubules. Required for centriole organization and microtubule anchoring at the mother centriole. This is Ninein (NIN) from Homo sapiens (Human).